A 93-amino-acid chain; its full sequence is Large ribosomal subunit protein uL23 (93 aa).

This sequence belongs to the universal ribosomal protein uL23 family. Part of the 50S ribosomal subunit. Contacts protein L29, and trigger factor when it is bound to the ribosome.

Functionally, one of the early assembly proteins it binds 23S rRNA. One of the proteins that surrounds the polypeptide exit tunnel on the outside of the ribosome. Forms the main docking site for trigger factor binding to the ribosome. This is Large ribosomal subunit protein uL23 from Aliarcobacter butzleri (strain RM4018) (Arcobacter butzleri).